The following is a 177-amino-acid chain: Isopentenyl-diphosphate Delta-isomerase 1 (177 aa).

Mn(2+) is bound by residues H24 and H30. The Nudix hydrolase domain maps to 28-160 (SLHRAISIFI…PHAYSFWLEA (133 aa)). The active site involves C65. Residue C65 coordinates Mg(2+). H67 is a binding site for Mn(2+). Residue E85 coordinates Mg(2+). Mn(2+)-binding residues include E110 and E112. E112 is a catalytic residue.

It belongs to the IPP isomerase type 1 family. Mg(2+) serves as cofactor. Mn(2+) is required as a cofactor.

Its subcellular location is the cytoplasm. It catalyses the reaction isopentenyl diphosphate = dimethylallyl diphosphate. The protein operates within isoprenoid biosynthesis; dimethylallyl diphosphate biosynthesis; dimethylallyl diphosphate from isopentenyl diphosphate: step 1/1. Its function is as follows. Catalyzes the 1,3-allylic rearrangement of the homoallylic substrate isopentenyl (IPP) to its highly electrophilic allylic isomer, dimethylallyl diphosphate (DMAPP). This is Isopentenyl-diphosphate Delta-isomerase 1 from Aromatoleum aromaticum (strain DSM 19018 / LMG 30748 / EbN1) (Azoarcus sp. (strain EbN1)).